Reading from the N-terminus, the 330-residue chain is MKKSFIHQQQEISFVKNTFTQYLIDKLEIVEVQGPILSQVGDGMQDNLSGIEHPVSVKVLNIPEAEFEVVHSLAKWKRHTLARFGFNEGEGLFVHMKALRPDEDSLDPTHSVYVDQWDWEKVIPDGRRNLDYLKETVEKIYKAIRLTELAVEARFDIESILPKRITFIHTEELVEKYPDLSPKERENAIAKEYGAVFLIGIGGELADGKPHDGRAPDYDDWTTPSENGFKGLNGDILVWNEQLGTAFELSSMGIRVDEDALKRQVVLTGDEGRLEFEWHKTLLRGFFPLTIGGGIGQSRLAMFLLRKKHIGEVQSSVWPKEVRDTFENIL.

It belongs to the class-II aminoacyl-tRNA synthetase family. AsnA subfamily.

It is found in the cytoplasm. It catalyses the reaction L-aspartate + NH4(+) + ATP = L-asparagine + AMP + diphosphate + H(+). It functions in the pathway amino-acid biosynthesis; L-asparagine biosynthesis; L-asparagine from L-aspartate (ammonia route): step 1/1. This is Aspartate--ammonia ligase from Streptococcus agalactiae serotype III (strain NEM316).